The sequence spans 393 residues: Putative N(4)-(beta-N-acetylglucosaminyl)-L-asparaginase GH22932 (393 aa).

Positions 15 to 41 (ALKPITNSSSDTITPNPNLITTSRGSS) are disordered. The span at 19–41 (ITNSSSDTITPNPNLITTSRGSS) shows a compositional bias: polar residues. Disulfide bonds link cysteine 100–cysteine 105 and cysteine 199–cysteine 215. Threonine 246 serves as the catalytic Nucleophile. Residues 274 to 277 (RVGD) and 297 to 300 (TGDG) contribute to the substrate site. An intrachain disulfide couples cysteine 357 to cysteine 381.

The protein belongs to the Ntn-hydrolase family. In terms of assembly, heterotetramer of two alpha and two beta chains arranged as a dimer of alpha/beta heterodimers. Post-translationally, cleaved into an alpha and beta chain by autocatalysis; this activates the enzyme. The N-terminal residue of the beta subunit is responsible for the nucleophile hydrolase activity.

It catalyses the reaction N(4)-(beta-N-acetyl-D-glucosaminyl)-L-asparagine + H2O = N-acetyl-beta-D-glucosaminylamine + L-aspartate + H(+). Functionally, cleaves the GlcNAc-Asn bond which joins oligosaccharides to the peptide of asparagine-linked glycoproteins. This is Putative N(4)-(beta-N-acetylglucosaminyl)-L-asparaginase GH22932 from Drosophila grimshawi (Hawaiian fruit fly).